A 304-amino-acid chain; its full sequence is Cell surface-binding protein OPG105 (304 aa).

Positions 1 to 235 (MPQQLSPINI…NDDTQVYYSG (235 aa)) constitute an Alpha-carbonic anhydrase domain. The Virion surface portion of the chain corresponds to 1–275 (MPQQLSPINI…YQKYIEENKT (275 aa)). The helical transmembrane segment at 276–294 (FAIIAIVFVFILTAILFFM) threads the bilayer. Topologically, residues 295 to 304 (SRRYSREKQN) are intravirion.

Belongs to the alpha-carbonic anhydrase family. Homodimer; disulfide-linked. Apparently non-glycosylated.

The protein localises to the virion membrane. In terms of biological role, binds to chondroitin sulfate on the cell surface to provide virion attachment to target cell. The sequence is that of Cell surface-binding protein OPG105 (OPG105) from Bos taurus (Bovine).